A 342-amino-acid polypeptide reads, in one-letter code: uncharacterized protein (342 aa).

Helical transmembrane passes span 8–28 (FESS…TSLF), 39–59 (ISFL…MLWI), 79–99 (SSFS…FILI), 108–128 (IFWV…PFYM), 142–162 (GWYI…LIMP), 175–195 (INYF…AVVI), 207–227 (AMAP…VALI), 242–262 (FYIF…MAII), 276–296 (AMSW…THLV), and 304–324 (IVDY…IVTL).

The protein belongs to the tellurite-resistance/dicarboxylate transporter (TDT) family.

It localises to the cell membrane. This is an uncharacterized protein from Methanocaldococcus jannaschii (strain ATCC 43067 / DSM 2661 / JAL-1 / JCM 10045 / NBRC 100440) (Methanococcus jannaschii).